A 46-amino-acid chain; its full sequence is Mu-segestritoxin-Sf1h (46 aa).

4 disulfide bridges follow: Cys-3–Cys-19, Cys-10–Cys-22, Cys-18–Cys-42, and Cys-24–Cys-40. The keys region for toxin activity stretch occupies residues 31 to 33 (RPW).

This sequence belongs to the neurotoxin 16 (SFI) family. Expressed by the venom gland.

The protein localises to the secreted. Insecticidal toxin. It inhibits insect voltage-gated sodium channels (Nav) by partially blocking the channel pore in DUM neurons from the American cockroach, not by acting as a gating modifier. The inhibition is only partially reversible after prolonged washout. In vivo, the toxin causes flaccid paralysis followed by death when injected into Heliothis virescens larvae. It also causes uncoordinated movements followed by full paralysis to sheep blowflies (Lucilia cuprina). When the toxin is fused to snowdrop lectin, it is orally active against larvae of the tomato moth (Laconobia oleracea), the rice brown planthopper (Nilaparvata lugens), and the peach-potato aphid (Myzus persicae). The chain is Mu-segestritoxin-Sf1h from Segestria florentina (Tube-web spider).